The sequence spans 392 residues: Esterase EstB (392 aa).

Ser-75 functions as the Acyl-ester intermediate in the catalytic mechanism.

It belongs to the class-A beta-lactamase family.

The protein resides in the cytoplasm. Its activity is regulated as follows. Strongly inhibited by eserin, NaF, HgCl2, SDS and Triton X-100. Acts on short-chain (C4-C6) fatty acid esters and triglycerides, including tertiary alcohol esters. Activity on p-nitrophenyl esters is generally higher than on o-nitrophenyl esters. Lacks beta-lactamase activity; it hydrolyzes the ester bond of cephalosporin substrates but there is no opening of the beta-lactam ring observed. This Burkholderia gladioli (Pseudomonas marginata) protein is Esterase EstB (estB).